A 585-amino-acid chain; its full sequence is Zinc finger protein 496 (585 aa).

The interval 1–41 is disordered; that stretch reads MPTALCPRVLAPKESEEPRKMRSPPGENPSPQGEPPSPESS. A compositionally biased stretch (basic and acidic residues) spans 11 to 20; that stretch reads APKESEEPRK. Lys13 is covalently cross-linked (Glycyl lysine isopeptide (Lys-Gly) (interchain with G-Cter in SUMO2)). The span at 26 to 38 shows a compositional bias: pro residues; the sequence is GENPSPQGEPPSP. Residues 42-124 form the SCAN box domain; the sequence is RRLFRRFRYQ…AAVEALEREP (83 aa). A disordered region spans residues 141–167; sequence DDGDGPAAPQDLEQERMSAESQSYPDA. Ser182 is subject to Phosphoserine. The KRAB domain occupies 220-294; sequence SPFKDMILCF…DLQDKEIPQA (75 aa). The interval 358-397 is disordered; it reads SSSGDEDSQHSPYCTEELRSPPEDLHSVPAHQSNASAEGE. Residues 373-383 are compositionally biased toward basic and acidic residues; it reads EELRSPPEDLH. Positions 387 to 397 are enriched in polar residues; the sequence is AHQSNASAEGE. The segment at 405–427 adopts a C2H2-type 1; degenerate zinc-finger fold; it reads YVCPNCGKIFRWRVNFIRHLRSR. 2 consecutive C2H2-type zinc fingers follow at residues 433–455 and 461–483; these read HKCS…LETH and YRCT…RRIH. Positions 483-506 are disordered; that stretch reads HLQPASQQPMKKSEEEALETEGTG. Lys494 is covalently cross-linked (Glycyl lysine isopeptide (Lys-Gly) (interchain with G-Cter in SUMO2)). 2 consecutive C2H2-type zinc fingers follow at residues 520 to 543 and 551 to 573; these read FQCG…RHCH and FQCR…ERLH. Positions 575–579 match the Nuclear localization signal motif; the sequence is KRRSK.

Belongs to the krueppel C2H2-type zinc-finger protein family. As to quaternary structure, interacts (via zinc-fingers) with JARID2. Interacts with NSD1.

The protein localises to the nucleus. In terms of biological role, DNA-binding transcription factor that can both act as an activator and a repressor. The protein is Zinc finger protein 496 (Znf496) of Mus musculus (Mouse).